Here is a 425-residue protein sequence, read N- to C-terminus: Queuine tRNA-ribosyltransferase accessory subunit 2 (425 aa).

Positions 302–323 (QNGAQDLEKNSPEEDQEEEVVK) are disordered. Residues cysteine 351, cysteine 353, cysteine 356, and histidine 382 each contribute to the Zn(2+) site.

The protein belongs to the queuine tRNA-ribosyltransferase family. QTRT2 subfamily. In terms of assembly, heterodimer of a catalytic subunit QTRT1 and an accessory subunit QTRT2. Zn(2+) serves as cofactor.

The protein localises to the cytoplasm. It localises to the mitochondrion outer membrane. In terms of biological role, non-catalytic subunit of the queuine tRNA-ribosyltransferase (TGT) that catalyzes the base-exchange of a guanine (G) residue with queuine (Q) at position 34 (anticodon wobble position) in tRNAs with GU(N) anticodons (tRNA-Asp, -Asn, -His and -Tyr), resulting in the hypermodified nucleoside queuosine (7-(((4,5-cis-dihydroxy-2-cyclopenten-1-yl)amino)methyl)-7-deazaguanosine). This is Queuine tRNA-ribosyltransferase accessory subunit 2 from Gallus gallus (Chicken).